The sequence spans 215 residues: Sodium channel regulatory subunit beta-2 (215 aa).

A signal peptide spans 1–29 (MHRDAWLPRPAFSLTGLSLFFSLVPPGRS). Over 30–157 (MEVTVPATLN…XEEPPERDST (128 aa)) the chain is Extracellular. An Ig-like C2-type domain is found at 32–154 (VTVPATLNVL…QVLXEEPPER (123 aa)). N-linked (GlcNAc...) asparagine glycosylation is found at Asn-42, Asn-66, and Asn-74. Cystine bridges form between Cys-50–Cys-127 and Cys-72–Cys-75. A helical transmembrane segment spans residues 158 to 179 (VAVIVGASVGGFLAVVILVLMV). Over 180 to 215 (VKCVRRKKEQKLSTDDLKTEEEGKTDGEGNPDDGAK) the chain is Cytoplasmic. A disordered region spans residues 187–215 (KEQKLSTDDLKTEEEGKTDGEGNPDDGAK). Residues 189–215 (QKLSTDDLKTEEEGKTDGEGNPDDGAK) show a composition bias toward basic and acidic residues. Ser-192 is modified (phosphoserine). Thr-204 is subject to Phosphothreonine.

Belongs to the sodium channel auxiliary subunit SCN2B (TC 8.A.17) family. As to quaternary structure, a voltage-gated sodium (Nav) channel consists of an ion-conducting pore-forming alpha subunit functional on its own that is regulated by one or more beta subunits. The beta subunit SCN2B is disulfide-linked to the pore-forming alpha subunit. Interacts with SCN1A; regulatory subunit of SCN1A/Nav1.1. Interacts with SCN2A; regulatory subunit of SCN2A/Nav1.2. Interacts with SCN3A; regulatory subunit of SCN3A/Nav1.3. Interacts with SCN5A; regulatory subunit of SCN5A/Nav1.5. Interacts with SCN8A; regulatory subunit of SCN8A/Nav1.6. Interacts with SCN9A; regulatory subunit of SCN9A/Nav1.7. Interacts with SCN10A; regulatory subunit of SCN10A/Nav1.8. Interacts with TNR; may play a crucial role in clustering and regulation of activity of SCN2B-containing Nav channels at nodes of Ranvier.

It is found in the cell membrane. The protein localises to the cell projection. The protein resides in the axon. Its function is as follows. Regulatory subunit of multiple voltage-gated sodium (Nav) channels, that directly mediate the depolarization of excitable membranes. Navs, also called VGSCs (voltage-gated sodium channels) or VDSCs (voltage-dependent sodium channels), operate by switching between closed and open conformations depending on the voltage difference across the membrane. In the open conformation they allow Na(+) ions to selectively pass through the pore, along their electrochemical gradient. The influx of Na+ ions provokes membrane depolarization, initiating the propagation of electrical signals throughout cells and tissues. The accessory beta subunits participate in localization and functional modulation of the Nav channels. Modulates the activity of SCN1A/Nav1.1, SCN2A/Nav1.2, SCN2A/Nav1.3, SCN5A/Nav1.5, SCN8A/Nav1.6, SCN9A/Nav1.7 and SCN10A/Nav1.8. This chain is Sodium channel regulatory subunit beta-2, found in Canis lupus familiaris (Dog).